A 130-amino-acid chain; its full sequence is Small ribosomal subunit protein uS9 (130 aa).

It belongs to the universal ribosomal protein uS9 family.

The protein is Small ribosomal subunit protein uS9 of Burkholderia ambifaria (strain MC40-6).